A 367-amino-acid polypeptide reads, in one-letter code: Aflatoxin B1 aldehyde reductase member 2 (367 aa).

Over residues 1–31 the composition is skewed to low complexity; it reads MLRAASRAVGRAAVRSAQRSGTSVGRPLAMS. The disordered stretch occupies residues 1–45; sequence MLRAASRAVGRAAVRSAQRSGTSVGRPLAMSRPPPPRAASGAPLR. The transit peptide at 1-46 directs the protein to the mitochondrion; it reads MLRAASRAVGRAAVRSAQRSGTSVGRPLAMSRPPPPRAASGAPLRP. S40 carries the phosphoserine modification. Position 48 is a phosphothreonine (T48). D80 contributes to the NADP(+) binding site. Y85 functions as the Proton donor in the catalytic mechanism. K136 carries the post-translational modification N6-acetyllysine. Position 149 (H149) interacts with substrate. NADP(+) contacts are provided by residues 179 to 180, Q205, 234 to 244, and R258; these read SN and NPLAGGLLTGK. K244 bears the N6-succinyllysine mark. Y268 and R271 together coordinate substrate. 326–334 provides a ligand contact to NADP(+); that stretch reads SSLEQLEQN. R367 provides a ligand contact to substrate.

It belongs to the aldo/keto reductase family. Aldo/keto reductase 2 subfamily. As to quaternary structure, homodimer. Expressed in liver, kidney, testis and brain with low levels in skeletal muscle, spleen, heart and lung.

The protein resides in the mitochondrion. It localises to the golgi apparatus. Its subcellular location is the cytoplasm. It carries out the reaction 4-hydroxybutanoate + NADP(+) = succinate semialdehyde + NADPH + H(+). Its activity is regulated as follows. Inhibited by citrate, succinate and tartrate. In terms of biological role, catalyzes the NADPH-dependent reduction of succinic semialdehyde to gamma-hydroxybutyrate. May have an important role in producing the neuromodulator gamma-hydroxybutyrate (GHB). Has broad substrate specificity. Can reduce the dialdehyde protein-binding form of aflatoxin B1 (AFB1) to the non-binding AFB1 dialcohol. May be involved in protection of liver against the toxic and carcinogenic effects of AFB1, a potent hepatocarcinogen. The polypeptide is Aflatoxin B1 aldehyde reductase member 2 (Mus musculus (Mouse)).